The sequence spans 1036 residues: Putative GPI-anchored protein pfl2 (1036 aa).

The N-terminal stretch at Met-1–Ala-23 is a signal peptide. N-linked (GlcNAc...) asparagine glycosylation is found at Asn-66, Asn-97, Asn-165, Asn-201, Asn-233, Asn-259, Asn-277, Asn-296, Asn-312, Asn-331, Asn-347, Asn-363, Asn-379, Asn-395, Asn-410, Asn-429, Asn-445, Asn-461, Asn-477, Asn-493, Asn-509, Asn-524, Asn-543, Asn-559, and Asn-573. Disordered stretches follow at residues Ser-88–Ala-130 and Ser-147–Ser-183. The span at Ser-243–Gly-585 shows a compositional bias: low complexity. The disordered stretch occupies residues Ser-243–Thr-710. Positions Glu-586–Gly-595 are enriched in polar residues. Over residues Val-597–Gly-630 the composition is skewed to low complexity. N-linked (GlcNAc...) asparagine glycans are attached at residues Asn-611, Asn-626, Asn-642, Asn-657, Asn-673, Asn-688, Asn-704, Asn-719, and Asn-735. The span at Leu-631–Pro-647 shows a compositional bias: polar residues. A compositionally biased stretch (low complexity) spans Thr-648 to Gly-692. The segment covering Leu-693–Pro-709 has biased composition (polar residues). Composition is skewed to low complexity over residues Ser-722–Ser-831, Pro-838–Thr-862, and Ile-885–Pro-906. 2 disordered regions span residues Ser-722–Thr-862 and Ile-885–Asn-918. N-linked (GlcNAc...) asparagine glycosylation is found at Asn-918, Asn-924, Asn-930, Asn-933, Asn-939, Asn-947, and Asn-977. A disordered region spans residues Thr-978–Ser-1011. Over residues Thr-990 to Ser-1011 the composition is skewed to low complexity. Residue Ser-1011 is the site of GPI-anchor amidated serine attachment. A propeptide spans Ala-1012–Ala-1036 (removed in mature form).

Its subcellular location is the cell membrane. May be involved in agglutination during conjugation or other aspects of colony formation. Induces flocculation when overexpressed. In Schizosaccharomyces pombe (strain 972 / ATCC 24843) (Fission yeast), this protein is Putative GPI-anchored protein pfl2.